Consider the following 128-residue polypeptide: 3-aminoacrylate deaminase RutC (128 aa).

This sequence belongs to the RutC family.

It carries out the reaction (Z)-3-aminoacrylate + H2O + H(+) = 3-oxopropanoate + NH4(+). Functionally, involved in pyrimidine catabolism. Catalyzes the deamination of 3-aminoacrylate to malonic semialdehyde, a reaction that can also occur spontaneously. RutC may facilitate the reaction and modulate the metabolic fitness, rather than catalyzing essential functions. The protein is 3-aminoacrylate deaminase RutC of Serratia proteamaculans (strain 568).